The following is a 397-amino-acid chain: Nuclear egress protein 2 (397 aa).

Topologically, residues 1–358 (MEMNKVLHQD…GPSRPQSGPW (358 aa)) are perinuclear space. Disordered stretches follow at residues 205–245 (RTAG…PPPP) and 291–332 (AAAG…PSLE). The residue at position 216 (serine 216) is a Phosphoserine. Composition is skewed to low complexity over residues 224-239 (PSCS…AAAG) and 291-301 (AAAGQDVGGSA). Residues 310 to 322 (SRRRGVSTHHRHP) are compositionally biased toward basic residues. The helical transmembrane segment at 359–381 (LPARFATLGPLVLALLLVLALLW) threads the bilayer. The Nuclear portion of the chain corresponds to 382–397 (RGHGQSSSPTRSAHRD).

It belongs to the herpesviridae NEC2 protein family. In terms of assembly, forms a heterohexameric complex with NEC1. Interacts with host UBA7 and RNF170; this interaction promotes UBA7 proteasomal degradation. Phosphorylated. Phosphorylation by viral kinase UL97 at Ser-216 plays an important role for correct viral nuclear egress complex (NEC) localization.

It is found in the host nucleus inner membrane. Functionally, plays an essential role in virion nuclear egress, the first step of virion release from infected cell. Within the host nucleus, NEC1 interacts with the newly formed capsid through the vertexes and directs it to the inner nuclear membrane by associating with NEC2. Induces the budding of the capsid at the inner nuclear membrane as well as its envelopment into the perinuclear space. There, the NEC1/NEC2 complex promotes the fusion of the enveloped capsid with the outer nuclear membrane and the subsequent release of the viral capsid into the cytoplasm where it will reach the secondary budding sites in the host Golgi or trans-Golgi network. Inhibits host ISGylation and subsequent innate antiviral response by targeting host UBA7 for proteasomal degradation. In Human cytomegalovirus (strain AD169) (HHV-5), this protein is Nuclear egress protein 2.